The following is a 279-amino-acid chain: NH(3)-dependent NAD(+) synthetase (279 aa).

46 to 53 (GISGGQDS) provides a ligand contact to ATP. Asp-52 lines the Mg(2+) pocket. Arg-145 lines the deamido-NAD(+) pocket. ATP is bound at residue Thr-165. Position 170 (Glu-170) interacts with Mg(2+). Lys-178 and Asp-185 together coordinate deamido-NAD(+). Residues Lys-194 and Thr-216 each contribute to the ATP site. A deamido-NAD(+)-binding site is contributed by 265-266 (HK).

This sequence belongs to the NAD synthetase family. In terms of assembly, homodimer.

It catalyses the reaction deamido-NAD(+) + NH4(+) + ATP = AMP + diphosphate + NAD(+) + H(+). It participates in cofactor biosynthesis; NAD(+) biosynthesis; NAD(+) from deamido-NAD(+) (ammonia route): step 1/1. Functionally, catalyzes the ATP-dependent amidation of deamido-NAD to form NAD. Uses ammonia as a nitrogen source. The chain is NH(3)-dependent NAD(+) synthetase from Rhodococcus opacus (strain B4).